Consider the following 89-residue polypeptide: Large ribosomal subunit protein bL27 (89 aa).

The tract at residues 1 to 22 is disordered; the sequence is MAHKKGTGSTRNGRDSNAQRLG. Residues 7–19 are compositionally biased toward polar residues; the sequence is TGSTRNGRDSNAQ.

Belongs to the bacterial ribosomal protein bL27 family.

The sequence is that of Large ribosomal subunit protein bL27 from Cyanothece sp. (strain PCC 7425 / ATCC 29141).